A 427-amino-acid chain; its full sequence is Trigger factor (427 aa).

Positions 165-250 (GDTVVIDFEG…LHEIQEQVPA (86 aa)) constitute a PPIase FKBP-type domain.

The protein belongs to the FKBP-type PPIase family. Tig subfamily.

It localises to the cytoplasm. The enzyme catalyses [protein]-peptidylproline (omega=180) = [protein]-peptidylproline (omega=0). Involved in protein export. Acts as a chaperone by maintaining the newly synthesized protein in an open conformation. Functions as a peptidyl-prolyl cis-trans isomerase. This Sulfurovum sp. (strain NBC37-1) protein is Trigger factor.